The sequence spans 346 residues: Heat-inducible transcription repressor HrcA (346 aa).

The protein belongs to the HrcA family.

In terms of biological role, negative regulator of class I heat shock genes (grpE-dnaK-dnaJ and groELS operons). Prevents heat-shock induction of these operons. This is Heat-inducible transcription repressor HrcA from Erythrobacter litoralis (strain HTCC2594).